A 1048-amino-acid chain; its full sequence is Putative cation efflux system protein SilA (1048 aa).

Helical transmembrane passes span 14–34 (FLVMMGALFLSIWGTWTIINT), 125–145 (VSSEIGPDATGVGWIFEYALV), 338–358 (LSSKLLEEFFVVAIVCALFLW), 363–383 (ALVAIISLPLGLCIAFIVMHF), 391–411 (MSLGGIAIAVGAMVDAAIVMI), 446–466 (VGPALFISLLIITLSFIPIFT), 485–505 (SMAGAAALAIIVIPILMGFWI), 539–559 (TLLVAALSIFTVVWPLSQVGG), 737–757 (GMTVGDVQLFVSSAIGGAMVG), 871–891 (KLKLMVPMTVMIIFILLYLAF), 897–917 (ALLILMSLPFALVGGIWFLYW), 928–948 (TGFIALAGVAAEFGVVMLMYL), 985–1005 (AMTVAVIIAGLLPILWGTGAG), and 1012–1032 (IAAPMIGGMITAPLLSLFIIP).

Belongs to the resistance-nodulation-cell division (RND) (TC 2.A.6) family.

The protein resides in the cell inner membrane. Component of the sil cation-efflux system that confers resistance to silver. May be part of a three-component cation/proton antiporter. The polypeptide is Putative cation efflux system protein SilA (silA) (Salmonella typhimurium).